The chain runs to 210 residues: Small heat shock protein hspG6 (210 aa).

Residues 34–210 (KTIIDKLPPM…YSNTIKININ (177 aa)) enclose the sHSP domain. Residues 93–151 (VIEKSTSSSTLDSKEDEPSIEEFEDDIKPKSKSDNTTVSTTTTATTKENKEDENKTKST) are disordered. Positions 126–138 (DNTTVSTTTTATT) are enriched in low complexity. Residues 139–151 (KENKEDENKTKST) are compositionally biased toward basic and acidic residues.

Belongs to the small heat shock protein (HSP20) family.

This chain is Small heat shock protein hspG6 (hspG6), found in Dictyostelium discoideum (Social amoeba).